We begin with the raw amino-acid sequence, 423 residues long: Glucose-1-phosphate adenylyltransferase (423 aa).

Residues tyrosine 112, glycine 177, 192–193 (EK), and serine 210 each bind alpha-D-glucose 1-phosphate.

It belongs to the bacterial/plant glucose-1-phosphate adenylyltransferase family. Homotetramer.

It carries out the reaction alpha-D-glucose 1-phosphate + ATP + H(+) = ADP-alpha-D-glucose + diphosphate. It participates in glycan biosynthesis; glycogen biosynthesis. Its function is as follows. Involved in the biosynthesis of ADP-glucose, a building block required for the elongation reactions to produce glycogen. Catalyzes the reaction between ATP and alpha-D-glucose 1-phosphate (G1P) to produce pyrophosphate and ADP-Glc. In Rhodospirillum rubrum (strain ATCC 11170 / ATH 1.1.1 / DSM 467 / LMG 4362 / NCIMB 8255 / S1), this protein is Glucose-1-phosphate adenylyltransferase.